The primary structure comprises 64 residues: Short neurotoxin 1 (64 aa).

4 disulfide bridges follow: C3-C26, C20-C43, C45-C56, and C57-C62.

This sequence belongs to the three-finger toxin family. Short-chain subfamily. Type I alpha-neurotoxin sub-subfamily. As to expression, expressed by the venom gland.

It is found in the secreted. Binds to muscle nicotinic acetylcholine receptor (nAChR) and inhibit acetylcholine from binding to the receptor, thereby impairing neuromuscular transmission. The polypeptide is Short neurotoxin 1 (Bungarus fasciatus (Banded krait)).